We begin with the raw amino-acid sequence, 290 residues long: Ribonuclease 3 (290 aa).

The RNase III domain occupies 20–145 (YSCFYRILGF…FIGAIYLDRG (126 aa)). Glu-62 contributes to the Mg(2+) binding site. Asp-66 is an active-site residue. Residues Asn-131 and Glu-134 each coordinate Mg(2+). Glu-134 is a catalytic residue. Residues 173–242 (NFKSKLIEWS…AQMTLKKIKG (70 aa)) form the DRBM domain. The disordered stretch occupies residues 254–290 (KTQNNVPAEDTTPESETSLTAENQQIDEIISTEEISV). Over residues 267 to 279 (ESETSLTAENQQI) the composition is skewed to polar residues.

The protein belongs to the ribonuclease III family. Homodimer. Mg(2+) is required as a cofactor.

Its subcellular location is the cytoplasm. The enzyme catalyses Endonucleolytic cleavage to 5'-phosphomonoester.. Its function is as follows. Digests double-stranded RNA. Involved in the processing of primary rRNA transcript to yield the immediate precursors to the large and small rRNAs (23S and 16S). Processes some mRNAs, and tRNAs when they are encoded in the rRNA operon. Processes pre-crRNA and tracrRNA of type II CRISPR loci if present in the organism. This chain is Ribonuclease 3, found in Bacteroides fragilis (strain ATCC 25285 / DSM 2151 / CCUG 4856 / JCM 11019 / LMG 10263 / NCTC 9343 / Onslow / VPI 2553 / EN-2).